The following is a 150-amino-acid chain: Large ribosomal subunit protein uL13 (150 aa).

This sequence belongs to the universal ribosomal protein uL13 family. As to quaternary structure, part of the 50S ribosomal subunit.

Its function is as follows. This protein is one of the early assembly proteins of the 50S ribosomal subunit, although it is not seen to bind rRNA by itself. It is important during the early stages of 50S assembly. In Chlamydia trachomatis serovar A (strain ATCC VR-571B / DSM 19440 / HAR-13), this protein is Large ribosomal subunit protein uL13.